Reading from the N-terminus, the 233-residue chain is Mediator of RNA polymerase II transcription subunit 7 (233 aa).

K185 participates in a covalent cross-link: Glycyl lysine isopeptide (Lys-Gly) (interchain with G-Cter in SUMO1); alternate. Residue K185 forms a Glycyl lysine isopeptide (Lys-Gly) (interchain with G-Cter in SUMO2); alternate linkage. The interval 188 to 213 (PMDADDSNNCTGQSDQQRENSGHRRD) is disordered. S194 is modified (phosphoserine). Positions 203–213 (QQRENSGHRRD) are enriched in basic and acidic residues.

It belongs to the Mediator complex subunit 7 family. As to quaternary structure, component of the Mediator complex, which is composed of MED1, MED4, MED6, MED7, MED8, MED9, MED10, MED11, MED12, MED13, MED13L, MED14, MED15, MED16, MED17, MED18, MED19, MED20, MED21, MED22, MED23, MED24, MED25, MED26, MED27, MED29, MED30, MED31, CCNC, CDK8 and CDC2L6/CDK11. The MED12, MED13, CCNC and CDK8 subunits form a distinct module termed the CDK8 module. Mediator containing the CDK8 module is less active than Mediator lacking this module in supporting transcriptional activation. Individual preparations of the Mediator complex lacking one or more distinct subunits have been variously termed ARC, CRSP, DRIP, PC2, SMCC and TRAP.

It localises to the nucleus. Its function is as follows. Component of the Mediator complex, a coactivator involved in the regulated transcription of nearly all RNA polymerase II-dependent genes. Mediator functions as a bridge to convey information from gene-specific regulatory proteins to the basal RNA polymerase II transcription machinery. Mediator is recruited to promoters by direct interactions with regulatory proteins and serves as a scaffold for the assembly of a functional preinitiation complex with RNA polymerase II and the general transcription factors. The polypeptide is Mediator of RNA polymerase II transcription subunit 7 (MED7) (Sus scrofa (Pig)).